The primary structure comprises 512 residues: Sodium/proline symporter (512 aa).

Helical transmembrane passes span 16-36 (WQTY…GFYG), 54-74 (IGPY…WMIM), 85-105 (LSAM…YFVV), 139-159 (IISG…GFVS), 174-194 (FGLI…GYLA), 200-220 (FFQG…AMMN), 240-260 (LFKG…LGYF), 286-306 (ISWM…GIAF), 327-347 (VLFH…AIMS), 381-401 (FVMI…AIAW), 410-430 (LVGN…LFAL), 438-458 (AGAV…IAWI), and 467-487 (IFGL…TYVV).

Belongs to the sodium:solute symporter (SSF) (TC 2.A.21) family.

The protein resides in the cell membrane. The enzyme catalyses L-proline(in) + Na(+)(in) = L-proline(out) + Na(+)(out). Catalyzes the sodium-dependent uptake of extracellular L-proline. Since most S.aureus strains are L-proline auxotrophs, this transporter may aid the bacterial persistence during an infection of tissues with low proline concentrations. The sequence is that of Sodium/proline symporter (putP) from Staphylococcus aureus (strain Newman).